We begin with the raw amino-acid sequence, 85 residues long: UPF0298 protein SUB0431 (85 aa).

Belongs to the UPF0298 family.

The protein localises to the cytoplasm. The polypeptide is UPF0298 protein SUB0431 (Streptococcus uberis (strain ATCC BAA-854 / 0140J)).